A 142-amino-acid polypeptide reads, in one-letter code: Large ribosomal subunit protein uL13 (142 aa).

This sequence belongs to the universal ribosomal protein uL13 family. In terms of assembly, part of the 50S ribosomal subunit.

This protein is one of the early assembly proteins of the 50S ribosomal subunit, although it is not seen to bind rRNA by itself. It is important during the early stages of 50S assembly. This Shigella dysenteriae serotype 1 (strain Sd197) protein is Large ribosomal subunit protein uL13.